Consider the following 353-residue polypeptide: Serine/threonine-protein kinase SRK2G (353 aa).

Positions 4 to 260 constitute a Protein kinase domain; that stretch reads YDVVKDLGAG…LKEIKNHPWY (257 aa). ATP contacts are provided by residues 10–18 and Lys-33; that span reads LGAGNFGVA. Residue Asp-123 is the Proton acceptor of the active site. Residues 299-353 form a disordered region; sequence RNPAPSTSAVKSSGSGADEEEEEDVEAEVEEEEDDEDEYEKHVKEAQSCQESDKA. Residues 302–313 show a composition bias toward polar residues; that stretch reads APSTSAVKSSGS. Positions 315–336 are enriched in acidic residues; that stretch reads ADEEEEEDVEAEVEEEEDDEDE. Basic and acidic residues predominate over residues 337-353; the sequence is YEKHVKEAQSCQESDKA.

Belongs to the protein kinase superfamily. Ser/Thr protein kinase family. As to expression, expressed in seedlings.

Its subcellular location is the nucleus. The catalysed reaction is L-seryl-[protein] + ATP = O-phospho-L-seryl-[protein] + ADP + H(+). It carries out the reaction L-threonyl-[protein] + ATP = O-phospho-L-threonyl-[protein] + ADP + H(+). This chain is Serine/threonine-protein kinase SRK2G (SRK2G), found in Arabidopsis thaliana (Mouse-ear cress).